Consider the following 223-residue polypeptide: Glycerol-3-phosphate acyltransferase (223 aa).

A run of 5 helical transmembrane segments spans residues leucine 2–isoleucine 22, tryptophan 52–phenylalanine 72, proline 78–methionine 98, isoleucine 112–isoleucine 132, and leucine 153–valine 173. Positions tryptophan 191–glycine 223 are disordered.

The protein belongs to the PlsY family. As to quaternary structure, probably interacts with PlsX.

The protein resides in the cell inner membrane. The enzyme catalyses an acyl phosphate + sn-glycerol 3-phosphate = a 1-acyl-sn-glycero-3-phosphate + phosphate. Its pathway is lipid metabolism; phospholipid metabolism. Its function is as follows. Catalyzes the transfer of an acyl group from acyl-phosphate (acyl-PO(4)) to glycerol-3-phosphate (G3P) to form lysophosphatidic acid (LPA). This enzyme utilizes acyl-phosphate as fatty acyl donor, but not acyl-CoA or acyl-ACP. The chain is Glycerol-3-phosphate acyltransferase from Desulfovibrio desulfuricans (strain ATCC 27774 / DSM 6949 / MB).